A 106-amino-acid polypeptide reads, in one-letter code: COX assembly mitochondrial protein homolog (106 aa).

N-acetylalanine is present on alanine 2. A CHCH domain is found at 28–71 (KERCSEQVQDFTKCCKNSGVLMVVKCRKENSALKECLTAYYNDP). 2 consecutive short sequence motifs (cx9C motif) follow at residues 31–41 (CSEQVQDFTKC) and 53–63 (CRKENSALKEC). Cystine bridges form between cysteine 31/cysteine 63 and cysteine 41/cysteine 53.

The protein belongs to the CMC family. Component of the MITRAC (mitochondrial translation regulation assembly intermediate of cytochrome c oxidase complex) complex, the core components of this complex being COA3/MITRAC12 and COX14.

The protein resides in the mitochondrion. Component of the MITRAC (mitochondrial translation regulation assembly intermediate of cytochrome c oxidase complex) complex, that regulates cytochrome c oxidase assembly. In Homo sapiens (Human), this protein is COX assembly mitochondrial protein homolog (CMC1).